The primary structure comprises 185 residues: Ribonuclease HII (185 aa).

The 185-residue stretch at 1–185 folds into the RNase H type-2 domain; that stretch reads MKICGIDEAG…LKHLQGILEF (185 aa). A divalent metal cation-binding residues include D7, E8, and D96.

This sequence belongs to the RNase HII family. The cofactor is Mn(2+). It depends on Mg(2+) as a cofactor.

The protein localises to the cytoplasm. The enzyme catalyses Endonucleolytic cleavage to 5'-phosphomonoester.. Endonuclease that specifically degrades the RNA of RNA-DNA hybrids. The protein is Ribonuclease HII of Campylobacter hominis (strain ATCC BAA-381 / DSM 21671 / CCUG 45161 / LMG 19568 / NCTC 13146 / CH001A).